We begin with the raw amino-acid sequence, 241 residues long: ATP synthase subunit a (241 aa).

Helical transmembrane passes span Gly-30–Gly-50, Phe-91–Trp-111, Ile-128–Ser-148, Leu-193–Leu-213, and Gly-214–Gly-234.

It belongs to the ATPase A chain family. F-type ATPases have 2 components, CF(1) - the catalytic core - and CF(0) - the membrane proton channel. CF(1) has five subunits: alpha(3), beta(3), gamma(1), delta(1), epsilon(1). CF(0) has four main subunits: a, b, b' and c.

Its subcellular location is the cellular thylakoid membrane. Functionally, key component of the proton channel; it plays a direct role in the translocation of protons across the membrane. The polypeptide is ATP synthase subunit a (Prochlorococcus marinus (strain MIT 9301)).